We begin with the raw amino-acid sequence, 268 residues long: Elongation factor Ts (268 aa).

The tract at residues 81–84 (TDFV) is involved in Mg(2+) ion dislocation from EF-Tu.

Belongs to the EF-Ts family.

The protein resides in the cytoplasm. Its function is as follows. Associates with the EF-Tu.GDP complex and induces the exchange of GDP to GTP. It remains bound to the aminoacyl-tRNA.EF-Tu.GTP complex up to the GTP hydrolysis stage on the ribosome. This Buchnera aphidicola subsp. Acyrthosiphon pisum (strain 5A) protein is Elongation factor Ts.